Consider the following 215-residue polypeptide: Translation initiation factor IF-3 (215 aa).

The interval 159–215 is disordered; it reads SAEVQQPPKREGRNMIMFLGPRKTPLQKDKPEQATKAERTLPIAKPPGKTAAPAAAN. The segment covering 184-197 has biased composition (basic and acidic residues); the sequence is LQKDKPEQATKAER. Residues 200 to 215 are compositionally biased toward low complexity; that stretch reads PIAKPPGKTAAPAAAN.

Belongs to the IF-3 family. Monomer.

It localises to the cytoplasm. IF-3 binds to the 30S ribosomal subunit and shifts the equilibrium between 70S ribosomes and their 50S and 30S subunits in favor of the free subunits, thus enhancing the availability of 30S subunits on which protein synthesis initiation begins. The polypeptide is Translation initiation factor IF-3 (Synechococcus sp. (strain RCC307)).